Reading from the N-terminus, the 212-residue chain is ATP-dependent Clp protease proteolytic subunit (212 aa).

S106 (nucleophile) is an active-site residue. H131 is an active-site residue.

This sequence belongs to the peptidase S14 family. As to quaternary structure, fourteen ClpP subunits assemble into 2 heptameric rings which stack back to back to give a disk-like structure with a central cavity, resembling the structure of eukaryotic proteasomes.

Its subcellular location is the cytoplasm. It carries out the reaction Hydrolysis of proteins to small peptides in the presence of ATP and magnesium. alpha-casein is the usual test substrate. In the absence of ATP, only oligopeptides shorter than five residues are hydrolyzed (such as succinyl-Leu-Tyr-|-NHMec, and Leu-Tyr-Leu-|-Tyr-Trp, in which cleavage of the -Tyr-|-Leu- and -Tyr-|-Trp bonds also occurs).. Cleaves peptides in various proteins in a process that requires ATP hydrolysis. Has a chymotrypsin-like activity. Plays a major role in the degradation of misfolded proteins. In Rhodopseudomonas palustris (strain HaA2), this protein is ATP-dependent Clp protease proteolytic subunit.